Reading from the N-terminus, the 155-residue chain is 3-dehydroquinate dehydratase 1 (155 aa).

Tyr28 serves as the catalytic Proton acceptor. Asn80, His86, and Asp93 together coordinate substrate. His106 acts as the Proton donor in catalysis. Residues 107–108 (VT) and Arg117 contribute to the substrate site.

It belongs to the type-II 3-dehydroquinase family. Homododecamer.

It carries out the reaction 3-dehydroquinate = 3-dehydroshikimate + H2O. The protein operates within metabolic intermediate biosynthesis; chorismate biosynthesis; chorismate from D-erythrose 4-phosphate and phosphoenolpyruvate: step 3/7. Its function is as follows. Catalyzes a trans-dehydration via an enolate intermediate. The polypeptide is 3-dehydroquinate dehydratase 1 (aroQ1) (Bradyrhizobium diazoefficiens (strain JCM 10833 / BCRC 13528 / IAM 13628 / NBRC 14792 / USDA 110)).